Reading from the N-terminus, the 431-residue chain is Tol-Pal system protein TolB (431 aa).

The N-terminal stretch at 1 to 18 is a signal peptide; the sequence is MKALLLSLLLLLPVVALA. The tract at residues 410-431 is disordered; that stretch reads LPLRTEKGTYQTPDWSPLPQAQ.

The protein belongs to the TolB family. In terms of assembly, the Tol-Pal system is composed of five core proteins: the inner membrane proteins TolA, TolQ and TolR, the periplasmic protein TolB and the outer membrane protein Pal. They form a network linking the inner and outer membranes and the peptidoglycan layer.

The protein resides in the periplasm. Its function is as follows. Part of the Tol-Pal system, which plays a role in outer membrane invagination during cell division and is important for maintaining outer membrane integrity. The sequence is that of Tol-Pal system protein TolB from Myxococcus xanthus.